Reading from the N-terminus, the 158-residue chain is 6,7-dimethyl-8-ribityllumazine synthase (158 aa).

Residues phenylalanine 22, 57-59, and 81-83 each bind 5-amino-6-(D-ribitylamino)uracil; these read AVE and AVI. 86-87 provides a ligand contact to (2S)-2-hydroxy-3-oxobutyl phosphate; the sequence is GT. Histidine 89 functions as the Proton donor in the catalytic mechanism. Phenylalanine 114 is a 5-amino-6-(D-ribitylamino)uracil binding site. A (2S)-2-hydroxy-3-oxobutyl phosphate-binding site is contributed by arginine 128.

Belongs to the DMRL synthase family. Forms an icosahedral capsid composed of 60 subunits, arranged as a dodecamer of pentamers.

It carries out the reaction (2S)-2-hydroxy-3-oxobutyl phosphate + 5-amino-6-(D-ribitylamino)uracil = 6,7-dimethyl-8-(1-D-ribityl)lumazine + phosphate + 2 H2O + H(+). It participates in cofactor biosynthesis; riboflavin biosynthesis; riboflavin from 2-hydroxy-3-oxobutyl phosphate and 5-amino-6-(D-ribitylamino)uracil: step 1/2. Functionally, catalyzes the formation of 6,7-dimethyl-8-ribityllumazine by condensation of 5-amino-6-(D-ribitylamino)uracil with 3,4-dihydroxy-2-butanone 4-phosphate. This is the penultimate step in the biosynthesis of riboflavin. The chain is 6,7-dimethyl-8-ribityllumazine synthase from Shewanella piezotolerans (strain WP3 / JCM 13877).